A 241-amino-acid chain; its full sequence is Beta-nerve growth factor (241 aa).

The first 18 residues, 1–18 (MSMLFYTLITAFLIGTQA), serve as a signal peptide directing secretion. Positions 19–121 (EPHSESNVPA…PFNRTHRSKR (103 aa)) are excised as a propeptide. Residues asparagine 69, asparagine 114, and asparagine 166 are each glycosylated (N-linked (GlcNAc...) asparagine). 3 disulfides stabilise this stretch: cysteine 136/cysteine 201, cysteine 179/cysteine 229, and cysteine 189/cysteine 231. A 1-acyl-sn-glycero-3-phospho-(1D-myo-inositol)-binding residues include tyrosine 173 and lysine 209. Lysine 209 provides a ligand contact to a 1-acyl-sn-glycero-3-phospho-L-serine.

This sequence belongs to the NGF-beta family. In terms of assembly, homodimer. The homodimer interacts with a single NTRK1 chain. The homodimer interacts with a single NGFR chain. The NGF dimer interacts with a single SORCS2 chain (via extracellular domain). The NGF precursor (proNGF) binds to a receptor complex formed by SORT1 and NGFR, which leads to NGF endocytosis. Both mature NGF and the immature NGF precursor (proNGF) interact with SORCS2 and with the heterodimer formed by SORCS2 and NGFR (via extracellular domains). The NGF precursor (proNGF) has much higher affinity for SORCS2 than mature NGF. The NGF precursor (proNGF) has much higher affinity for SORT1 than mature NGF. Interacts with ADAM10 in a divalent cation-dependent manner. Interacts with SORCS3.

The protein resides in the secreted. It localises to the endosome lumen. Its function is as follows. Nerve growth factor is important for the development and maintenance of the sympathetic and sensory nervous systems. Extracellular ligand for the NTRK1 and NGFR receptors, activates cellular signaling cascades to regulate neuronal proliferation, differentiation and survival. The immature NGF precursor (proNGF) functions as a ligand for the heterodimeric receptor formed by SORCS2 and NGFR, and activates cellular signaling cascades that lead to inactivation of RAC1 and/or RAC2, reorganization of the actin cytoskeleton and neuronal growth cone collapse. In contrast to mature NGF, the precursor form (proNGF) promotes neuronal apoptosis (in vitro). Inhibits metalloproteinase-dependent proteolysis of platelet glycoprotein VI. Binds lysophosphatidylinositol and lysophosphatidylserine between the two chains of the homodimer. The lipid-bound form promotes histamine relase from mast cells, contrary to the lipid-free form. In Pan troglodytes (Chimpanzee), this protein is Beta-nerve growth factor (NGF).